The sequence spans 96 residues: Exodeoxyribonuclease 7 small subunit (96 aa).

The disordered stretch occupies residues 73 to 96 (RAPEQSAANDVSAPGSAEEHDHGR).

The protein belongs to the XseB family. Heterooligomer composed of large and small subunits.

The protein resides in the cytoplasm. It catalyses the reaction Exonucleolytic cleavage in either 5'- to 3'- or 3'- to 5'-direction to yield nucleoside 5'-phosphates.. Its function is as follows. Bidirectionally degrades single-stranded DNA into large acid-insoluble oligonucleotides, which are then degraded further into small acid-soluble oligonucleotides. This chain is Exodeoxyribonuclease 7 small subunit, found in Acidothermus cellulolyticus (strain ATCC 43068 / DSM 8971 / 11B).